A 424-amino-acid polypeptide reads, in one-letter code: Tyrosine--tRNA ligase 1 (424 aa).

Y37 contacts L-tyrosine. The short motif at 42–51 (PTADSLHLGH) is the 'HIGH' region element. The L-tyrosine site is built by Y175 and Q179. Positions 235 to 239 (KFGKT) match the 'KMSKS' region motif. K238 lines the ATP pocket. The 58-residue stretch at 357–414 (ADLQQALVNAGLVPSRGQARTMISSNAVAINGEKQSEPEYLFTDSNRLFDRYTLLRRG) folds into the S4 RNA-binding domain.

This sequence belongs to the class-I aminoacyl-tRNA synthetase family. TyrS type 1 subfamily. Homodimer.

It localises to the cytoplasm. The enzyme catalyses tRNA(Tyr) + L-tyrosine + ATP = L-tyrosyl-tRNA(Tyr) + AMP + diphosphate + H(+). Catalyzes the attachment of tyrosine to tRNA(Tyr) in a two-step reaction: tyrosine is first activated by ATP to form Tyr-AMP and then transferred to the acceptor end of tRNA(Tyr). In Photorhabdus laumondii subsp. laumondii (strain DSM 15139 / CIP 105565 / TT01) (Photorhabdus luminescens subsp. laumondii), this protein is Tyrosine--tRNA ligase 1.